The primary structure comprises 174 residues: Vimentin-type intermediate filament-associated coiled-coil protein (174 aa).

The stretch at 7 to 97 (LQIREANAHL…DQRDQMIQQL (91 aa)) forms a coiled coil. The tract at residues 128 to 174 (GPLPASHSHRAQLLPDGPGPPLGNNMGKEEGQDDQDDQQPAVFGTTV) is disordered.

The protein resides in the cytoplasm. The chain is Vimentin-type intermediate filament-associated coiled-coil protein (Vmac) from Mus musculus (Mouse).